The primary structure comprises 294 residues: Putative deoxyribonuclease TATDN3 (294 aa).

Residues His-9, His-11, Glu-104, His-144, His-167, and Asp-215 each contribute to the Zn(2+) site.

The protein belongs to the metallo-dependent hydrolases superfamily. TatD-type hydrolase family. Mn(2+) is required as a cofactor. Requires Ca(2+) as cofactor. Mg(2+) serves as cofactor. It depends on Zn(2+) as a cofactor.

The protein resides in the nucleus. With respect to regulation, the 3'-exonuclease activity is sensitive to the metal ion present in the active site, whereas the AP endodeoxyribonuclease activity is observed in a variety of divalent metal cofactors. 3'-exoxonuclease activity is suppressed in the presence of Ca(2+), Zn(2+) and Ni(2+). In terms of biological role, exhibits 3'-exonuclease activities and apurinic/apyrimidinic (AP) endonuclease (in vitro). Show preferential AP endonuclease activity on double-stranded DNA substrates and 3'- exonuclease activity on single-stranded DNA. The polypeptide is Putative deoxyribonuclease TATDN3 (Tatdn3) (Mus musculus (Mouse)).